A 229-amino-acid polypeptide reads, in one-letter code: Clathrin light chain B (229 aa).

2 stretches are compositionally biased toward low complexity: residues 1–17 (MAED…GAPE) and 45–58 (GAPA…AQPG). Residues 1–80 (MAEDFGFFSS…TVNGDVFQEA (80 aa)) are disordered. 2 positions are modified to phosphoserine: Ser-11 and Ser-13. The interval 93-155 (ADRLTQEPES…QVEKNKINNR (63 aa)) is involved in binding clathrin heavy chain. Position 187 is a phosphothreonine (Thr-187). An intrachain disulfide couples Cys-199 to Cys-209. Residue Lys-204 is modified to N6-acetyllysine. Ser-217 carries the post-translational modification Phosphoserine.

It belongs to the clathrin light chain family. Clathrin coats are formed from molecules containing 3 heavy chains and 3 light chains. Interacts (via N-terminus) with HIP1. Interacts with HIP1R.

The protein localises to the cytoplasmic vesicle membrane. It localises to the membrane. The protein resides in the coated pit. Functionally, clathrin is the major protein of the polyhedral coat of coated pits and vesicles. This chain is Clathrin light chain B (Cltb), found in Rattus norvegicus (Rat).